A 465-amino-acid chain; its full sequence is Phosphomannomutase/phosphoglucomutase (465 aa).

Ser110 (phosphoserine intermediate) is an active-site residue. Positions 110, 244, 246, and 248 each coordinate Mg(2+). Substrate contacts are provided by Glu327, Ser329, and His331.

This sequence belongs to the phosphohexose mutase family. As to quaternary structure, monomer. Mg(2+) serves as cofactor.

The catalysed reaction is alpha-D-mannose 1-phosphate = D-mannose 6-phosphate. It carries out the reaction alpha-D-glucose 1-phosphate = alpha-D-glucose 6-phosphate. The protein operates within nucleotide-sugar biosynthesis; GDP-alpha-D-mannose biosynthesis; alpha-D-mannose 1-phosphate from D-fructose 6-phosphate: step 2/2. Its pathway is bacterial outer membrane biogenesis; lipopolysaccharide biosynthesis. In terms of biological role, the phosphomannomutase activity produces a precursor for alginate polymerization. The alginate layer causes a mucoid phenotype and provides a protective barrier against host immune defenses and antibiotics. Also involved in core-LPS biosynthesis due to its phosphoglucomutase activity. Essential for biofilm production. This chain is Phosphomannomutase/phosphoglucomutase (algC), found in Pseudomonas syringae pv. tomato (strain ATCC BAA-871 / DC3000).